A 206-amino-acid chain; its full sequence is Small ribosomal subunit protein uS4 (206 aa).

The 63-residue stretch at Arg94–Leu156 folds into the S4 RNA-binding domain.

Belongs to the universal ribosomal protein uS4 family. Part of the 30S ribosomal subunit. Contacts protein S5. The interaction surface between S4 and S5 is involved in control of translational fidelity.

Functionally, one of the primary rRNA binding proteins, it binds directly to 16S rRNA where it nucleates assembly of the body of the 30S subunit. With S5 and S12 plays an important role in translational accuracy. The polypeptide is Small ribosomal subunit protein uS4 (Roseiflexus castenholzii (strain DSM 13941 / HLO8)).